The sequence spans 427 residues: Glutamate-1-semialdehyde 2,1-aminomutase (427 aa).

The residue at position 267 (lysine 267) is an N6-(pyridoxal phosphate)lysine.

It belongs to the class-III pyridoxal-phosphate-dependent aminotransferase family. HemL subfamily. In terms of assembly, homodimer. Pyridoxal 5'-phosphate is required as a cofactor.

It localises to the cytoplasm. It carries out the reaction (S)-4-amino-5-oxopentanoate = 5-aminolevulinate. Its pathway is porphyrin-containing compound metabolism; protoporphyrin-IX biosynthesis; 5-aminolevulinate from L-glutamyl-tRNA(Glu): step 2/2. The protein is Glutamate-1-semialdehyde 2,1-aminomutase of Geobacter metallireducens (strain ATCC 53774 / DSM 7210 / GS-15).